The sequence spans 399 residues: Small ribosomal subunit protein uS3m (399 aa).

This sequence belongs to the universal ribosomal protein uS3 family.

The protein localises to the mitochondrion. Its function is as follows. Essential for mitochondrial protein synthesis and required for the maturation of small ribosomal subunits. This chain is Small ribosomal subunit protein uS3m, found in Penicillium urticae.